Reading from the N-terminus, the 398-residue chain is MLTLPNERGRFGMFGGKFVPETLMRPLADIERQLYEALADPSFHAEYMHHLYEYSGRPTALTFAKNLTERLGGAKMYFKREDLNHTGAHKINNAIGQALLAKRMGKRKIIAETGAGQHGVAAATVAARFGMECKVFMGEEDVKRQSLNVFRMKLLGAEVIPVTSGNRTLKDATNEAIRYWVEHCDDHFYMIGSVVGPHPYPMMVREFQRIIGEEAREQMLKAEGKLPNTIIACVGGGSNAIGMFHPFLDDDVECIGVEAAGKGVHTTEHAATITKGTKGVIHGSLTYVLQDEHGQIVEPYSISAGLDYPGVGPEHAYLAHIGRVRYESVTDEEAIAALQMTAETEGIIPAIESAHALAKAFQIAPLRSKHETILVCLSGRGDKDVQTVMNYLEGDERK.

Lys90 carries the post-translational modification N6-(pyridoxal phosphate)lysine.

It belongs to the TrpB family. In terms of assembly, tetramer of two alpha and two beta chains. Requires pyridoxal 5'-phosphate as cofactor.

It carries out the reaction (1S,2R)-1-C-(indol-3-yl)glycerol 3-phosphate + L-serine = D-glyceraldehyde 3-phosphate + L-tryptophan + H2O. It participates in amino-acid biosynthesis; L-tryptophan biosynthesis; L-tryptophan from chorismate: step 5/5. Its function is as follows. The beta subunit is responsible for the synthesis of L-tryptophan from indole and L-serine. The sequence is that of Tryptophan synthase beta chain from Anoxybacillus flavithermus (strain DSM 21510 / WK1).